Consider the following 400-residue polypeptide: Argininosuccinate synthase (400 aa).

An ATP-binding site is contributed by 10–18; it reads AYSGGVDTS. Tyrosine 89 provides a ligand contact to L-citrulline. Glycine 119 contributes to the ATP binding site. The L-aspartate site is built by threonine 121, asparagine 125, and aspartate 126. L-citrulline is bound at residue asparagine 125. L-citrulline is bound by residues arginine 129, serine 177, serine 186, glutamate 262, and tyrosine 274.

The protein belongs to the argininosuccinate synthase family. Type 1 subfamily. As to quaternary structure, homotetramer.

It localises to the cytoplasm. It carries out the reaction L-citrulline + L-aspartate + ATP = 2-(N(omega)-L-arginino)succinate + AMP + diphosphate + H(+). It functions in the pathway amino-acid biosynthesis; L-arginine biosynthesis; L-arginine from L-ornithine and carbamoyl phosphate: step 2/3. This Synechococcus sp. (strain JA-2-3B'a(2-13)) (Cyanobacteria bacterium Yellowstone B-Prime) protein is Argininosuccinate synthase.